We begin with the raw amino-acid sequence, 51 residues long: Large ribosomal subunit protein bL32c (51 aa).

The protein belongs to the bacterial ribosomal protein bL32 family.

Its subcellular location is the plastid. The protein resides in the chloroplast. In Oenothera elata subsp. hookeri (Hooker's evening primrose), this protein is Large ribosomal subunit protein bL32c.